The following is a 414-amino-acid chain: 3-phosphoshikimate 1-carboxyvinyltransferase (414 aa).

Residues Lys20, Ser21, and Arg25 each coordinate 3-phosphoshikimate. Lys20 lines the phosphoenolpyruvate pocket. Phosphoenolpyruvate is bound by residues Gly85 and Arg113. Residues Ser154, Ser155, Gln156, Ser181, Asp296, and Lys323 each coordinate 3-phosphoshikimate. Gln156 is a binding site for phosphoenolpyruvate. Catalysis depends on Asp296, which acts as the Proton acceptor. Residues Arg327, Arg371, and Lys395 each contribute to the phosphoenolpyruvate site.

Belongs to the EPSP synthase family. As to quaternary structure, monomer.

It localises to the cytoplasm. It carries out the reaction 3-phosphoshikimate + phosphoenolpyruvate = 5-O-(1-carboxyvinyl)-3-phosphoshikimate + phosphate. Its pathway is metabolic intermediate biosynthesis; chorismate biosynthesis. In terms of biological role, catalyzes the transfer of the enolpyruvyl moiety of phosphoenolpyruvate (PEP) to the 5-hydroxyl of shikimate-3-phosphate (S3P) to produce enolpyruvyl shikimate-3-phosphate and inorganic phosphate. In Saccharolobus islandicus (strain Y.G.57.14 / Yellowstone #1) (Sulfolobus islandicus), this protein is 3-phosphoshikimate 1-carboxyvinyltransferase.